The primary structure comprises 787 residues: Exocyst complex component SEC15B (787 aa).

This sequence belongs to the SEC15 family. The exocyst complex is composed of SEC3, SEC5, SEC6, SEC8, SEC10, EXO70A1 and EXO84B. Interacts with EXO84B. Binds to EXO70H1 AND EXO70B2. Binds directly to B1L.

Its subcellular location is the cytoplasm. It localises to the cytosol. The protein localises to the cytoskeleton. The protein resides in the phragmoplast. It is found in the secreted. Its subcellular location is the cell wall. It localises to the extracellular exosome. In terms of biological role, component of the exocyst complex involved in the docking of exocytic vesicles with fusion sites on the plasma membrane during regulated or polarized secretion. Involved in polarized cell growth and organ morphogenesis. During cytokinesis, involved in cell plate initiation, cell plate maturation and formation of new primary cell wall. The protein is Exocyst complex component SEC15B of Arabidopsis thaliana (Mouse-ear cress).